The chain runs to 344 residues: DNA-directed RNA polymerase subunit alpha (344 aa).

Residues 1 to 246 form an alpha N-terminal domain (alpha-NTD) region; that stretch reads MPVEKFLKDF…EFLFPLIDFE (246 aa). The alpha C-terminal domain (alpha-CTD) stretch occupies residues 259–344; the sequence is ESSNLLDMSI…VLSKNVKISE (86 aa).

This sequence belongs to the RNA polymerase alpha chain family. Homodimer. The RNAP catalytic core consists of 2 alpha, 1 beta, 1 beta' and 1 omega subunit. When a sigma factor is associated with the core the holoenzyme is formed, which can initiate transcription.

The catalysed reaction is RNA(n) + a ribonucleoside 5'-triphosphate = RNA(n+1) + diphosphate. In terms of biological role, DNA-dependent RNA polymerase catalyzes the transcription of DNA into RNA using the four ribonucleoside triphosphates as substrates. In Borrelia garinii subsp. bavariensis (strain ATCC BAA-2496 / DSM 23469 / PBi) (Borreliella bavariensis), this protein is DNA-directed RNA polymerase subunit alpha.